Consider the following 583-residue polypeptide: MATFKVSRVETKPYDGQKPGTSGLRKKVKVFAQPHYLENFVQSTFDALTADKIKGKTLVVSGDGRYYSEQAIQTIIKMSAANGVKSVWVGQDGLLSTPAVSAVIRERVGKDGSKASGAFILTASHNPGGPNEDFGIKYNMENGGPAQEGVTNKIYENTTTIKEYLIAKELPNVNISKTGVTSFSGPDGQFDVEVFDATETYVKLMKSIFDFQAIKKLLSIPSFTFCYDALHGVAGVYAKRIFVDELGANESSLLNCTPKEDFGGGHPDPNLTYAKELVERMGLGKSNTQGEPPEFGAAADGDADRNMILGKRFFVTPSDSVAIIAANAVEAIPYFSGGLKGVARSMPTSAALDVVAKHLNLKFFEVPTGWKFFGNLMDAGVCSICGEESFGTGSDHVREKDGIWAVLAWLSILAHKNKDNLNGEKLVTVEDIVCQHWATYGRHYYTRYDYENVDAGGAKELMAYLVNLQSDLSKVNNIVKGVHSGVANVIAADEFEYKDPVDGSVSKHQGIRYMFEDGSRLIFRLSGTGSEGATIRLYIEQYEKDSSKTGRDSQEALKPLVDVALKLSKMQEFSGRSEPTVIT.

The segment at 1–20 (MATFKVSRVETKPYDGQKPG) is disordered. Residues Arg25 and Ser124 each coordinate alpha-D-glucose 1,6-bisphosphate. Residue Ser124 is the Phosphoserine intermediate of the active site. Positions 124, 300, 302, and 304 each coordinate Mg(2+). The residue at position 124 (Ser124) is a Phosphoserine. Alpha-D-glucose 1,6-bisphosphate-binding residues include Asp304, Arg305, Thr368, Glu387, Ser389, and Lys400.

This sequence belongs to the phosphohexose mutase family. Monomer. The cofactor is Mg(2+).

It is found in the cytoplasm. The catalysed reaction is alpha-D-glucose 1-phosphate = alpha-D-glucose 6-phosphate. The enzyme catalyses O-phospho-L-seryl-[protein] + alpha-D-glucose 1-phosphate = alpha-D-glucose 1,6-bisphosphate + L-seryl-[protein]. It catalyses the reaction alpha-D-glucose 1,6-bisphosphate + L-seryl-[protein] = O-phospho-L-seryl-[protein] + alpha-D-glucose 6-phosphate. Functionally, catalyzes the reversible isomerization of alpha-D-glucose 1-phosphate to alpha-D-glucose 6-phosphate. The mechanism proceeds via the intermediate compound alpha-D-glucose 1,6-bisphosphate. This enzyme participates in both the breakdown and synthesis of glucose. The sequence is that of Phosphoglucomutase, cytoplasmic (PGM1) from Mesembryanthemum crystallinum (Common ice plant).